A 1464-amino-acid chain; its full sequence is DNA-directed RNA polymerase subunit beta' (1464 aa).

Residues Asp-541, Asp-543, and Asp-545 each contribute to the Mg(2+) site. Zn(2+) contacts are provided by Cys-1022, Cys-1098, Cys-1105, and Cys-1108. The disordered stretch occupies residues 1435–1464 (LEDEQQQIIEVDDSDISVEDEENDFYENED).

The protein belongs to the RNA polymerase beta' chain family. The RNAP catalytic core consists of 2 alpha, 1 beta, 1 beta' and 1 omega subunit. When a sigma factor is associated with the core the holoenzyme is formed, which can initiate transcription. Mg(2+) is required as a cofactor. Zn(2+) serves as cofactor.

It carries out the reaction RNA(n) + a ribonucleoside 5'-triphosphate = RNA(n+1) + diphosphate. In terms of biological role, DNA-dependent RNA polymerase catalyzes the transcription of DNA into RNA using the four ribonucleoside triphosphates as substrates. The chain is DNA-directed RNA polymerase subunit beta' from Metamycoplasma arthritidis (strain 158L3-1) (Mycoplasma arthritidis).